A 265-amino-acid chain; its full sequence is Gamma-secretase subunit APH-1A (265 aa).

Residues 1 to 2 (MG) are Lumenal-facing. The helical transmembrane segment at 3–23 (AAVFFGCTFVAFGPAFALFLI) threads the bilayer. Over 24–31 (TVAGDPLR) the chain is Cytoplasmic. A helical membrane pass occupies residues 32-52 (VIILVAGAFFWLVSLLLASVV). Topologically, residues 53-68 (WFILVHVTDRSDARLQ) are lumenal. Residues 69 to 89 (YGLLIFGAAVSVLLQEVFRFA) traverse the membrane as a helical segment. Residues 90-118 (YYKLLKKADEGLASLSEDGRSPISIRQMA) lie on the Cytoplasmic side of the membrane. The chain crosses the membrane as a helical span at residues 119-139 (YVSGLSFGIISGVFSVINILA). Residues 140-158 (DALGPGVVGIHGDSPYYFL) lie on the Lumenal side of the membrane. Residues 159–179 (TSAFLTAAIILLHTFWGVVFF) traverse the membrane as a helical segment. Over 180-186 (DACERRR) the chain is Cytoplasmic. The helical transmembrane segment at 187–207 (YWALGLVVGSHLLTSGLTFLN) threads the bilayer. At 208 to 213 (PWYEAS) the chain is on the lumenal side. A helical transmembrane segment spans residues 214-234 (LLPIYAVTVSMGLWAFITAGG). The Cytoplasmic segment spans residues 235–265 (SLRSIQRSLLCRRQEDSRVMVYSALRIPPED).

It belongs to the APH-1 family. As to quaternary structure, the functional gamma-secretase complex is composed of at least four polypeptides: a presenilin homodimer (PSEN1 or PSEN2), nicastrin (NCSTN), APH1 (APH1A or APH1B) and PSENEN/PEN2. In terms of tissue distribution, widely expressed. Expressed in leukocytes, lung, placenta, small intestine, liver, kidney, spleen thymus, skeletal muscle, heart and brain. Isoform 1 and isoform 2 are nearly expressed at the same level.

The protein resides in the endoplasmic reticulum membrane. The protein localises to the golgi apparatus. It localises to the golgi stack membrane. Functionally, non-catalytic subunit of the gamma-secretase complex, an endoprotease complex that catalyzes the intramembrane cleavage of integral membrane proteins such as Notch receptors and APP (amyloid-beta precursor protein). Required for normal gamma-secretase assembly. The gamma-secretase complex plays a role in Notch and Wnt signaling cascades and regulation of downstream processes via its role in processing key regulatory proteins, and by regulating cytosolic CTNNB1 levels. The polypeptide is Gamma-secretase subunit APH-1A (APH1A) (Homo sapiens (Human)).